We begin with the raw amino-acid sequence, 574 residues long: Septation ring formation regulator EzrA (574 aa).

Over 1–7 (MSSGIIL) the chain is Extracellular. Residues 8-26 (LIVAIVLLVIIAYLIGVII) form a helical membrane-spanning segment. Residues 27 to 574 (RKRNDSMIGT…YERTREHIRF (548 aa)) are Cytoplasmic-facing. Coiled coils occupy residues 102–140 (NFIR…QEEK), 243–379 (RRLL…GQEI), and 459–520 (QLEA…SFEA).

It belongs to the EzrA family.

The protein localises to the cell membrane. Negative regulator of FtsZ ring formation; modulates the frequency and position of FtsZ ring formation. Inhibits FtsZ ring formation at polar sites. Interacts either with FtsZ or with one of its binding partners to promote depolymerization. This is Septation ring formation regulator EzrA from Streptococcus uberis (strain ATCC BAA-854 / 0140J).